A 209-amino-acid polypeptide reads, in one-letter code: High frequency lysogenization protein HflD homolog (209 aa).

A coiled-coil region spans residues Leu95 to Ser132.

Belongs to the HflD family.

The protein localises to the cytoplasm. It is found in the cell inner membrane. The chain is High frequency lysogenization protein HflD homolog from Cronobacter sakazakii (strain ATCC BAA-894) (Enterobacter sakazakii).